Reading from the N-terminus, the 353-residue chain is BLOC-1-related complex subunit 6 (353 aa).

Positions alanine 23–threonine 194 are disordered. Over residues phenylalanine 102–cysteine 126 the composition is skewed to basic and acidic residues. Serine 130 and serine 166 each carry phosphoserine. The segment covering glycine 172–arginine 191 has biased composition (gly residues). Residue threonine 194 is modified to Phosphothreonine. The residue at position 197 (serine 197) is a Phosphoserine. Residues leucine 225–aspartate 253 form a disordered region. Residues proline 229–aspartate 253 are compositionally biased toward pro residues.

It belongs to the BORCS6 family. Component of the BLOC-one-related complex (BORC) which is composed of BLOC1S1, BLOC1S2, BORCS5, BORCS6, BORCS7, BORCS8, KXD1 and SNAPIN.

It localises to the lysosome membrane. Its function is as follows. As part of the BORC complex may play a role in lysosomes movement and localization at the cell periphery. Associated with the cytosolic face of lysosomes, the BORC complex may recruit ARL8B and couple lysosomes to microtubule plus-end-directed kinesin motor. In Bos taurus (Bovine), this protein is BLOC-1-related complex subunit 6.